Consider the following 171-residue polypeptide: UPF0312 protein SAOUHSC_03022 (171 aa).

It belongs to the UPF0312 family.

In Staphylococcus aureus (strain NCTC 8325 / PS 47), this protein is UPF0312 protein SAOUHSC_03022.